Reading from the N-terminus, the 348-residue chain is MSILIDNISKKFGNFQALNHINLEIKSGSIIALLGPSGSGKSTLLRIIAGLDTPDEGTIWISGKNASGYSIQSRNIGFVFQNYALFKNMTVYDNIAFGLELRRISFNDISRKVNKLLELVQLQNLGHRYPAQLSGGQRQRIALARALAIEPKVLLLDEPFGALDARVRKNLRAWLRDLHNKFSITTIIVTHDQQEAMEIADEIVVFNSGRIEQIGKPQDIYDQPATPFVFSLLGYVNKISFDNEIANFLLSSFPEKQSVLMQEKQFYIRPHQIVISKQSNESNYSAKIENLLYIGNWIHLDIYVASFNVNLKVHVSPKEFDNLQLKSFQENIYVSLRSKGKEPIRFLE.

The ABC transporter domain maps to 3 to 233 (ILIDNISKKF…PATPFVFSLL (231 aa)). 35–42 (GPSGSGKS) provides a ligand contact to ATP.

The protein belongs to the ABC transporter superfamily. Sulfate/tungstate importer (TC 3.A.1.6) family.

The protein localises to the plastid. The protein resides in the chloroplast. The catalysed reaction is sulfate(out) + ATP + H2O = sulfate(in) + ADP + phosphate + H(+). The enzyme catalyses thiosulfate(out) + ATP + H2O = thiosulfate(in) + ADP + phosphate + H(+). Functionally, part of the ABC transporter complex involved in sulfate/thiosulfate import. Responsible for energy coupling to the transport system. The sequence is that of Sulfate/thiosulfate import ATP-binding protein CysA from Mesostigma viride (Green alga).